Here is a 257-residue protein sequence, read N- to C-terminus: MLILVSPAKTLDFEQPPLTQVYSQPDFLTHSQELIQVCRQLTPSDIATLMKVSDKIAGLNAARFGEWQPDFSLDNAKQAIFAFRGDVYTGFDADSLSEDEIAQTQSQLRILSGLYGLLRPLDLIMPYRLEMGTALSNPKGKNLYEFWGDTLTQAVNEALAESGSDIIVNLASNEYFKAIKPKKLQGQLISPVFKDCKNGQYKVISFFAKRARGMMARYIITNKVNTLAELKAFNLAGYYYSEEQSSPTNPTFLREEQ.

This sequence belongs to the UPF0246 family.

The polypeptide is UPF0246 protein Sbal223_3241 (Shewanella baltica (strain OS223)).